Consider the following 548-residue polypeptide: 5-epi-aristolochene synthase 1 (548 aa).

Asp301, Asp305, Asp444, Thr448, and Glu452 together coordinate Mg(2+). Positions 301–305 (DDTFD) match the DDXXD motif motif.

The protein belongs to the terpene synthase family. In terms of assembly, monomer. Mg(2+) serves as cofactor. In terms of tissue distribution, expressed in roots, but not in shoots.

Its subcellular location is the cytoplasm. The catalysed reaction is (2E,6E)-farnesyl diphosphate = (+)-5-epi-aristolochene + diphosphate. Its pathway is secondary metabolite biosynthesis; terpenoid biosynthesis. Functionally, catalyzes the cyclization of trans,trans-farnesyl diphosphate (FPP) to the bicyclic intermediate 5-epi-aristolochene, initial step in the conversion of FPP to the sesquiterpenoid antifungal phytoalexin capsidiol. Produces germacrene A as an enzyme-bound intermediate that is not released by the enzyme, but is further cyclized to produce the bicyclic 5-epi-aristolochene. The polypeptide is 5-epi-aristolochene synthase 1 (EAS) (Nicotiana attenuata (Coyote tobacco)).